The following is a 140-amino-acid chain: Large ribosomal subunit protein uL16 (140 aa).

The protein belongs to the universal ribosomal protein uL16 family. Part of the 50S ribosomal subunit.

Functionally, binds 23S rRNA and is also seen to make contacts with the A and possibly P site tRNAs. The polypeptide is Large ribosomal subunit protein uL16 (Onion yellows phytoplasma (strain OY-M)).